A 314-amino-acid polypeptide reads, in one-letter code: Ribosomal RNA small subunit methyltransferase H (314 aa).

S-adenosyl-L-methionine contacts are provided by residues 36 to 38 (GGH), aspartate 56, phenylalanine 80, aspartate 102, and glutamine 109. The disordered stretch occupies residues 278–300 (GGRSLKSIGKMKPSEEEVADNPR). The span at 289-300 (KPSEEEVADNPR) shows a compositional bias: basic and acidic residues.

Belongs to the methyltransferase superfamily. RsmH family.

The protein localises to the cytoplasm. The catalysed reaction is cytidine(1402) in 16S rRNA + S-adenosyl-L-methionine = N(4)-methylcytidine(1402) in 16S rRNA + S-adenosyl-L-homocysteine + H(+). Functionally, specifically methylates the N4 position of cytidine in position 1402 (C1402) of 16S rRNA. The polypeptide is Ribosomal RNA small subunit methyltransferase H (Photorhabdus laumondii subsp. laumondii (strain DSM 15139 / CIP 105565 / TT01) (Photorhabdus luminescens subsp. laumondii)).